A 674-amino-acid polypeptide reads, in one-letter code: Methionine--tRNA ligase (674 aa).

Positions 11 to 21 (PYANGDLHLGH) match the 'HIGH' region motif. Zn(2+) is bound by residues cysteine 142, cysteine 145, cysteine 155, and cysteine 158. Positions 330–334 (KMSKS) match the 'KMSKS' region motif. Residue lysine 333 participates in ATP binding. One can recognise a tRNA-binding domain in the interval 574–674 (DFMKVDLRIA…EGAQPGMRVK (101 aa)).

This sequence belongs to the class-I aminoacyl-tRNA synthetase family. MetG type 1 subfamily. In terms of assembly, homodimer. Requires Zn(2+) as cofactor.

It is found in the cytoplasm. It carries out the reaction tRNA(Met) + L-methionine + ATP = L-methionyl-tRNA(Met) + AMP + diphosphate. Is required not only for elongation of protein synthesis but also for the initiation of all mRNA translation through initiator tRNA(fMet) aminoacylation. In Francisella tularensis subsp. tularensis (strain FSC 198), this protein is Methionine--tRNA ligase.